Here is a 491-residue protein sequence, read N- to C-terminus: Aspartyl/glutamyl-tRNA(Asn/Gln) amidotransferase subunit B (491 aa).

The protein belongs to the GatB/GatE family. GatB subfamily. In terms of assembly, heterotrimer of A, B and C subunits.

It carries out the reaction L-glutamyl-tRNA(Gln) + L-glutamine + ATP + H2O = L-glutaminyl-tRNA(Gln) + L-glutamate + ADP + phosphate + H(+). The catalysed reaction is L-aspartyl-tRNA(Asn) + L-glutamine + ATP + H2O = L-asparaginyl-tRNA(Asn) + L-glutamate + ADP + phosphate + 2 H(+). In terms of biological role, allows the formation of correctly charged Asn-tRNA(Asn) or Gln-tRNA(Gln) through the transamidation of misacylated Asp-tRNA(Asn) or Glu-tRNA(Gln) in organisms which lack either or both of asparaginyl-tRNA or glutaminyl-tRNA synthetases. The reaction takes place in the presence of glutamine and ATP through an activated phospho-Asp-tRNA(Asn) or phospho-Glu-tRNA(Gln). The sequence is that of Aspartyl/glutamyl-tRNA(Asn/Gln) amidotransferase subunit B from Burkholderia lata (strain ATCC 17760 / DSM 23089 / LMG 22485 / NCIMB 9086 / R18194 / 383).